Here is a 367-residue protein sequence, read N- to C-terminus: Nociceptin receptor (367 aa).

Topologically, residues 1-45 (MESLFPAPFWEVLYGSHFQGNLSLLNETVPHHLLLNASHSAFLPL) are extracellular. N-linked (GlcNAc...) asparagine glycans are attached at residues Asn21, Asn26, and Asn36. Residues 46–71 (GLKVTIVGLYLAVCIGGLLGNCLVMY) form a helical membrane-spanning segment. At 72–84 (VILRHTKMKTATN) the chain is on the cytoplasmic side. Residues 85–106 (IYIFNLALADTLVLLTLPFQGT) form a helical membrane-spanning segment. Over 107-121 (DILLGFWPFGNALCK) the chain is Extracellular. Cys120 and Cys197 are disulfide-bonded. The chain crosses the membrane as a helical span at residues 122–143 (TVIAIDYYNMFTSTFTLTAMSV). The Cytoplasmic segment spans residues 144–162 (DRYVAICHPIRALDVRTSS). A helical transmembrane segment spans residues 163 to 185 (KAQAVNVAIWALASVVGVPVAIM). Residues 186-208 (GSAQVEDEEIECLVEIPAPQDYW) are Extracellular-facing. The chain crosses the membrane as a helical span at residues 209 to 233 (GPVFAICIFLFSFIIPVLIISVCYS). Residues 234 to 261 (LMIRRLRGVRLLSGSREKDRNLRRITRL) are Cytoplasmic-facing. A helical transmembrane segment spans residues 262–282 (VLVVVAVFVGCWTPVQVFVLV). The Extracellular segment spans residues 283-297 (QGLGVQPGSETAVAI). Residues 298–319 (LRFCTALGYVNSCLNPILYAFL) traverse the membrane as a helical segment. Residues 320-367 (DENFKACFRKFCCASALHREMQVSDRVRSIAKDVGLGCKTSETVPRPA) lie on the Cytoplasmic side of the membrane. A lipid anchor (S-palmitoyl cysteine) is attached at Cys331.

Belongs to the G-protein coupled receptor 1 family. In terms of processing, phosphorylation at Ser-360 requires GRK3. As to expression, in the brain, isoform KOR3 and isoform KOR3C are most abundant in hypothalamus and periaqueductal gray. Isoform KOR3A is highly expressed in cortex, striatum and brainstem. Isoform KOR3D is highly expressed in cerebellum, hypothalamus and brainstem. Detected in spleen lymphocytes.

It localises to the cell membrane. Its subcellular location is the cytoplasmic vesicle. Functionally, G-protein coupled opioid receptor that functions as a receptor for the endogenous neuropeptide nociceptin. Ligand binding causes a conformation change that triggers signaling via guanine nucleotide-binding proteins (G proteins) and modulates the activity of down-stream effectors. Signaling via G proteins mediates inhibition of adenylate cyclase activity and calcium channel activity. Arrestins modulate signaling via G proteins and mediate the activation of alternative signaling pathways that lead to the activation of MAP kinases. Plays a role in modulating nociception and the perception of pain. Plays a role in the regulation of locomotor activity by the neuropeptide nociceptin. The sequence is that of Nociceptin receptor (Oprl1) from Mus musculus (Mouse).